Reading from the N-terminus, the 316-residue chain is HTH-type transcriptional regulator cbl (316 aa).

Positions 1 to 59 constitute an HTH lysR-type domain; sequence MNFQQLKIIREAARQDYNLTEVANMLFTSQSGVSRHIRELEDELGIEIFVRRGKRLLGM. The segment at residues 19–38 is a DNA-binding region (H-T-H motif); sequence LTEVANMLFTSQSGVSRHIR.

Belongs to the LysR transcriptional regulatory family.

In terms of biological role, may be an accessory regulatory protein within the cys regulon. This Escherichia coli (strain K12) protein is HTH-type transcriptional regulator cbl (cbl).